Reading from the N-terminus, the 137-residue chain is Small ribosomal subunit protein uS12 (137 aa).

Residues Met-1–Pro-55 are disordered. Asp-102 carries the 3-methylthioaspartic acid modification. Residues Ser-118–Lys-137 form a disordered region.

This sequence belongs to the universal ribosomal protein uS12 family. As to quaternary structure, part of the 30S ribosomal subunit. Contacts proteins S8 and S17. May interact with IF1 in the 30S initiation complex.

With S4 and S5 plays an important role in translational accuracy. Its function is as follows. Interacts with and stabilizes bases of the 16S rRNA that are involved in tRNA selection in the A site and with the mRNA backbone. Located at the interface of the 30S and 50S subunits, it traverses the body of the 30S subunit contacting proteins on the other side and probably holding the rRNA structure together. The combined cluster of proteins S8, S12 and S17 appears to hold together the shoulder and platform of the 30S subunit. This Staphylococcus saprophyticus subsp. saprophyticus (strain ATCC 15305 / DSM 20229 / NCIMB 8711 / NCTC 7292 / S-41) protein is Small ribosomal subunit protein uS12.